Consider the following 688-residue polypeptide: Hid-1 family protein P19A11.07c (688 aa).

This sequence belongs to the hid-1 family.

It localises to the cytoplasm. Its subcellular location is the nucleus. This Schizosaccharomyces pombe (strain 972 / ATCC 24843) (Fission yeast) protein is Hid-1 family protein P19A11.07c.